The following is a 308-amino-acid chain: Porphobilinogen deaminase (308 aa).

Cys-242 carries the S-(dipyrrolylmethanemethyl)cysteine modification.

Belongs to the HMBS family. In terms of assembly, monomer. The cofactor is dipyrromethane.

The catalysed reaction is 4 porphobilinogen + H2O = hydroxymethylbilane + 4 NH4(+). It participates in porphyrin-containing compound metabolism; protoporphyrin-IX biosynthesis; coproporphyrinogen-III from 5-aminolevulinate: step 2/4. Its function is as follows. Tetrapolymerization of the monopyrrole PBG into the hydroxymethylbilane pre-uroporphyrinogen in several discrete steps. The protein is Porphobilinogen deaminase of Alkalilimnicola ehrlichii (strain ATCC BAA-1101 / DSM 17681 / MLHE-1).